The following is a 399-amino-acid chain: Formaldehyde dismutase (399 aa).

Cys46 contacts Zn(2+). 47–51 lines the NAD(+) pocket; the sequence is GSDQH. His67, Cys97, Cys100, Cys103, Cys111, and Asp170 together coordinate Zn(2+). Thr174 contacts NAD(+). His177 contacts Zn(2+). NAD(+)-binding positions include 197 to 198, 218 to 219, Arg223, Val263, His268, Pro299, 299 to 301, and 336 to 338; these read PV, DQ, PGI, and GMA.

Belongs to the zinc-containing alcohol dehydrogenase family. As to quaternary structure, homotetramer. The cofactor is Zn(2+). Requires NAD(+) as cofactor. NADH is required as a cofactor.

It carries out the reaction 2 formaldehyde + H2O = methanol + formate + H(+). With respect to regulation, inhibited by the substrate analog pyrazole but not by NAD analogs such as AMP, ADP, ATP or N-methylnicotinamide chloride. Active against a range of primary alcohols as well as some secondary alcohols. Exhibits higher activity against alcohols with longer carbon chains. The protein is Formaldehyde dismutase of Pseudomonas putida (Arthrobacter siderocapsulatus).